The following is a 515-amino-acid chain: ATP synthase subunit alpha (515 aa).

ATP is bound at residue 169-176 (GDRQTGKT).

The protein belongs to the ATPase alpha/beta chains family. As to quaternary structure, F-type ATPases have 2 components, CF(1) - the catalytic core - and CF(0) - the membrane proton channel. CF(1) has five subunits: alpha(3), beta(3), gamma(1), delta(1), epsilon(1). CF(0) has three main subunits: a(1), b(2) and c(9-12). The alpha and beta chains form an alternating ring which encloses part of the gamma chain. CF(1) is attached to CF(0) by a central stalk formed by the gamma and epsilon chains, while a peripheral stalk is formed by the delta and b chains.

It localises to the cell inner membrane. The catalysed reaction is ATP + H2O + 4 H(+)(in) = ADP + phosphate + 5 H(+)(out). Its function is as follows. Produces ATP from ADP in the presence of a proton gradient across the membrane. The alpha chain is a regulatory subunit. In Myxococcus xanthus, this protein is ATP synthase subunit alpha.